Reading from the N-terminus, the 211-residue chain is MKPPISIQASEFDSSDEEPVDEEQTPIQISWLPLSRVNCSQFLGLCALPGCKFKDVRRNIQKDTEELKSYGIQDVFVFCTRGELSKYRVPNLLDLYQQYGIVTHHHPIPDGGTPDIGSCWEIMEELATCLKNNRKTLIHCYGGLGRSCLAACLLLYLSDSISPQQAIDSLRDVRGSGAIQTIKQYNYLHEFRDKLAAYLSSRDSLSRSVSR.

Residues 1–20 (MKPPISIQASEFDSSDEEPV) are disordered. Residues 1 to 34 (MKPPISIQASEFDSSDEEPVDEEQTPIQISWLPL) are interaction with CDK2. Residues 32 to 200 (LPLSRVNCSQ…FRDKLAAYLS (169 aa)) form the Tyrosine-protein phosphatase domain. The active-site Phosphocysteine intermediate is the Cys140.

Belongs to the protein-tyrosine phosphatase family. Interacts with cyclin-dependent kinases such as CDK1, CDK2 and CDK3. Does not interact with CDK4. Interacts (via C-terminus) with phosphorylated CDK2 (via C-terminal helix). Interacts with MS4A3 (via C-terminus); the interaction enhances CDKN3 enzymatic activity.

The protein resides in the cytoplasm. The protein localises to the perinuclear region. It carries out the reaction O-phospho-L-tyrosyl-[protein] + H2O = L-tyrosyl-[protein] + phosphate. The catalysed reaction is O-phospho-L-seryl-[protein] + H2O = L-seryl-[protein] + phosphate. It catalyses the reaction O-phospho-L-threonyl-[protein] + H2O = L-threonyl-[protein] + phosphate. In terms of biological role, may play a role in cell cycle regulation. Dual specificity phosphatase active toward substrates containing either phosphotyrosine or phosphoserine residues. Dephosphorylates CDK2 at 'Thr-160' in a cyclin-dependent manner. In Mus musculus (Mouse), this protein is Cyclin-dependent kinase inhibitor 3.